The primary structure comprises 101 residues: Large ribosomal subunit protein uL23 (101 aa).

It belongs to the universal ribosomal protein uL23 family. As to quaternary structure, part of the 50S ribosomal subunit. Contacts protein L29, and trigger factor when it is bound to the ribosome.

In terms of biological role, one of the early assembly proteins it binds 23S rRNA. One of the proteins that surrounds the polypeptide exit tunnel on the outside of the ribosome. Forms the main docking site for trigger factor binding to the ribosome. The chain is Large ribosomal subunit protein uL23 from Paenarthrobacter aurescens (strain TC1).